Here is a 440-residue protein sequence, read N- to C-terminus: Xylose isomerase (440 aa).

Residues His-101 and Asp-104 contribute to the active site. Residues Glu-232, Glu-268, His-271, Asp-296, Asp-307, Asp-309, and Asp-339 each contribute to the Mg(2+) site.

This sequence belongs to the xylose isomerase family. As to quaternary structure, homotetramer. It depends on Mg(2+) as a cofactor.

The protein localises to the cytoplasm. The catalysed reaction is alpha-D-xylose = alpha-D-xylulofuranose. The sequence is that of Xylose isomerase from Salmonella typhi.